The following is a 292-amino-acid chain: NAD(P)H-hydrate epimerase (292 aa).

A mitochondrion-targeting transit peptide spans 1 to 52 (MYGLRTLFSLGLLVGGARLGARVAQVGALGGTCPLGQGLVADGNSQCKQFRT). A YjeF N-terminal domain is found at 68 to 279 (AQAVDEELFN…ALEKKYSLNL (212 aa)). 122–126 (NNGGD) provides a ligand contact to (6S)-NADPHX. Residues Asn123 and Asp189 each coordinate K(+). Residues 193 to 199 (GFSFKGA) and Asp222 each bind (6S)-NADPHX. Ser225 contributes to the K(+) binding site.

The protein belongs to the NnrE/AIBP family. K(+) serves as cofactor.

It localises to the mitochondrion. Its subcellular location is the secreted. The catalysed reaction is (6R)-NADHX = (6S)-NADHX. The enzyme catalyses (6R)-NADPHX = (6S)-NADPHX. Catalyzes the epimerization of the S- and R-forms of NAD(P)HX, a damaged form of NAD(P)H that is a result of enzymatic or heat-dependent hydration. This is a prerequisite for the S-specific NAD(P)H-hydrate dehydratase to allow the repair of both epimers of NAD(P)HX. This is NAD(P)H-hydrate epimerase from Xenopus tropicalis (Western clawed frog).